Here is a 262-residue protein sequence, read N- to C-terminus: Snake venom serine protease catroxase-1 (262 aa).

The signal sequence occupies residues 1–18 (MVLIRVLANLLILQLSYA). A propeptide spanning residues 19–24 (QKSSEP) is cleaved from the precursor. Residues 25–250 (IIGGDECNRN…HLDWIQSIIA (226 aa)) form the Peptidase S1 domain. Cystine bridges form between Cys-31–Cys-162, Cys-49–Cys-65, Cys-97–Cys-257, Cys-141–Cys-211, Cys-173–Cys-190, and Cys-201–Cys-226. His-64 functions as the Charge relay system in the catalytic mechanism. Asn-102 carries N-linked (GlcNAc...) asparagine glycosylation. Catalysis depends on Asp-109, which acts as the Charge relay system. N-linked (GlcNAc...) asparagine glycosylation occurs at Asn-169. Ser-205 (charge relay system) is an active-site residue.

This sequence belongs to the peptidase S1 family. Snake venom subfamily. As to quaternary structure, monomer. As to expression, expressed by the venom gland.

It localises to the secreted. Snake venom serine protease that may act in the hemostasis system of the prey. The polypeptide is Snake venom serine protease catroxase-1 (Crotalus atrox (Western diamondback rattlesnake)).